We begin with the raw amino-acid sequence, 143 residues long: Large ribosomal subunit protein uL11 (143 aa).

The protein belongs to the universal ribosomal protein uL11 family. In terms of assembly, part of the ribosomal stalk of the 50S ribosomal subunit. Interacts with L10 and the large rRNA to form the base of the stalk. L10 forms an elongated spine to which L12 dimers bind in a sequential fashion forming a multimeric L10(L12)X complex. In terms of processing, one or more lysine residues are methylated.

Its function is as follows. Forms part of the ribosomal stalk which helps the ribosome interact with GTP-bound translation factors. The sequence is that of Large ribosomal subunit protein uL11 from Bifidobacterium longum (strain DJO10A).